Here is a 310-residue protein sequence, read N- to C-terminus: Olfactory receptor 5H14 (310 aa).

The Extracellular portion of the chain corresponds to 1–28 (MEEENATLLTEFVLTGFLYQPQWKIPLF). N5 carries an N-linked (GlcNAc...) asparagine glycan. A helical transmembrane segment spans residues 29–49 (LAFLVIYLITIMGNLGLIAVI). The Cytoplasmic segment spans residues 50 to 56 (WKDPHLH). A helical transmembrane segment spans residues 57–77 (IPMYLLLGNLAFVDALLSSSV). Topologically, residues 78–98 (TLKMLINFLAKSKMISLSECK) are extracellular. The cysteines at positions 97 and 179 are disulfide-linked. A helical transmembrane segment spans residues 99–119 (IQLFSFAISVTTECFLLATMA). At 120-143 (YDRYVAICKPLLYPAIMTNGLCIR) the chain is on the cytoplasmic side. The chain crosses the membrane as a helical span at residues 144 to 164 (LLILSYVGGLLHALIHEGFLF). Over 165–195 (RLTFCNSNIIQHFYCDIIPLLKISYTDSSIN) the chain is Extracellular. The chain crosses the membrane as a helical span at residues 196–216 (FLMVFIFAGSIQVFTIGTVLI). The Cytoplasmic segment spans residues 217–240 (SYIFVLYTILKKKSVKGMRKAFST). A helical transmembrane segment spans residues 241 to 261 (CGAHLLSVSLYYGPLAFMYMG). Residues 262–271 (SASPQADDQD) are Extracellular-facing. The chain crosses the membrane as a helical span at residues 272–292 (MMESLFYTVIVPLLNPMIYSL). The Cytoplasmic portion of the chain corresponds to 293-310 (RNKQVIASFTKMFKRNDV).

The protein belongs to the G-protein coupled receptor 1 family.

It is found in the cell membrane. Its function is as follows. Odorant receptor. This is Olfactory receptor 5H14 (OR5H14) from Homo sapiens (Human).